Here is a 1405-residue protein sequence, read N- to C-terminus: Rho guanine nucleotide exchange factor 18 (1405 aa).

Disordered stretches follow at residues 1–47 (MGSE…EDGF), 92–115 (ETHR…ALPQ), and 289–330 (PGKS…PGKR). Basic and acidic residues-rich tracts occupy residues 92–103 (ETHRQEARRESS) and 308–330 (RQKE…PGKR). The C2H2-type; degenerate zinc-finger motif lies at 347-372 (SSCPLCGEPLLNSASLKEHPRTTLLS). The 198-residue stretch at 485–682 (KRQDVLYELM…KDIISQVDAK (198 aa)) folds into the DH domain. The PH domain occupies 723–825 (QLHLEGALCW…WMAHIRRAVE (103 aa)). The interval 936 to 1016 (QVEEGSVSAG…PQAVEMPSTE (81 aa)) is disordered. Residue Thr952 is modified to Phosphothreonine. Ser961 is subject to Phosphoserine. Positions 1084–1181 (FEKQREERAG…RERLELLRRF (98 aa)) form a coiled coil. Disordered stretches follow at residues 1198 to 1242 (EAQP…VERP), 1274 to 1309 (RQTA…WESS), and 1328 to 1405 (ESAS…VIFF). 2 positions are modified to phosphoserine: Ser1336 and Ser1338. Over residues 1355-1365 (FPAPSPAPAAT) the composition is skewed to pro residues. Over residues 1375–1394 (TSLPPVSPASSLPTTPLATT) the composition is skewed to low complexity. The span at 1396 to 1405 (EVSKEDVIFF) shows a compositional bias: basic and acidic residues.

Interacts with SEPT9; interaction may inhibit GEF activity. Interacts with Gbetagamma subunits GNB1 and GNG2. Interacts with EPB41L4B. Interacts with PATJ (via C-terminus).

It is found in the cytoplasm. It localises to the cytoskeleton. The protein resides in the cell membrane. Its subcellular location is the apical cell membrane. Functionally, acts as a guanine nucleotide exchange factor (GEF) for RhoA GTPases. May play a role in actin cytoskeleton reorganization in different tissues since its activation induces formation of actin stress fibers. Also acts as a GEF for RAC1, inducing production of reactive oxygen species (ROS). Does not act as a GEF for CDC42. The G protein beta-gamma (Gbetagamma) subunits of heterotrimeric G proteins act as activators, explaining the integrated effects of LPA and other G-protein coupled receptor agonists on actin stress fiber formation, cell shape change and ROS production. Required for EPB41L4B-mediated regulation of the circumferential actomyosin belt in epithelial cells. The sequence is that of Rho guanine nucleotide exchange factor 18 (Arhgef18) from Mus musculus (Mouse).